The following is a 137-amino-acid chain: Small ribosomal subunit protein bS6 (137 aa).

The disordered stretch occupies residues 113 to 137; sequence EEQREKKNFRKPFIKREEAATKENK. Residues 126 to 137 are compositionally biased toward basic and acidic residues; that stretch reads IKREEAATKENK.

Belongs to the bacterial ribosomal protein bS6 family.

In terms of biological role, binds together with bS18 to 16S ribosomal RNA. This Mycoplasma capricolum subsp. capricolum (strain California kid / ATCC 27343 / NCTC 10154) protein is Small ribosomal subunit protein bS6.